Consider the following 292-residue polypeptide: G1/S-specific cyclin-D3 (292 aa).

The Cyclin N-terminal domain maps to 27-152 (VLQSLLRLEE…LVLGKLKWDL (126 aa)). A disordered region spans residues 255–292 (LREAAQTSPSPAPKAPRGSSSQGPSQTSTPTDVTAIHL). Residues Ser-264 and Ser-279 each carry the phosphoserine modification. Residues 272-285 (GSSSQGPSQTSTPT) are compositionally biased toward low complexity. Phosphothreonine is present on Thr-283.

It belongs to the cyclin family. Cyclin D subfamily. In terms of assembly, interacts with the CDK4 and CDK6 protein kinases to form a serine/threonine kinase holoenzyme complex. The cyclin subunit imparts substrate specificity to the complex. Interacts with ATF5. Interacts with EIF3K. Component of the ternary complex cyclin D/CDK4/CDKN1B required for nuclear translocation and modulation of CDK4-mediated kinase activity. Can form similar complexes with either CDKN1A or CDKN2A. Phosphorylation at Thr-283 by MAP kinases is required for ubiquitination and degradation by the DCX(AMBRA1) complex. In terms of processing, ubiquitinated by the DCX(AMBRA1) complex during the transition from G1 to S cell phase, leading to its degradation: ubiquitination is dependent on Thr-283 phosphorylation. The DCX(AMBRA1) complex represents the major regulator of CCND3 stability during the G1/S transition. Polyubiquitinated by the SCF(FBXL2) complex, leading to proteasomal degradation.

It localises to the nucleus. The protein localises to the cytoplasm. Functionally, regulatory component of the cyclin D3-CDK4 (DC) complex that phosphorylates and inhibits members of the retinoblastoma (RB) protein family including RB1 and regulates the cell-cycle during G(1)/S transition. Phosphorylation of RB1 allows dissociation of the transcription factor E2F from the RB/E2F complex and the subsequent transcription of E2F target genes which are responsible for the progression through the G(1) phase. Hypophosphorylates RB1 in early G(1) phase. Cyclin D-CDK4 complexes are major integrators of various mitogenenic and antimitogenic signals. Component of the ternary complex, cyclin D3/CDK4/CDKN1B, required for nuclear translocation and activity of the cyclin D-CDK4 complex. Shows transcriptional coactivator activity with ATF5 independently of CDK4. This Bos taurus (Bovine) protein is G1/S-specific cyclin-D3 (CCND3).